A 152-amino-acid polypeptide reads, in one-letter code: Protein NrdI (152 aa).

It belongs to the NrdI family.

Functionally, probably involved in ribonucleotide reductase function. This chain is Protein NrdI, found in Rhodococcus opacus (strain B4).